The primary structure comprises 681 residues: Mating-type protein beta1-1 (681 aa).

The homeobox; TALE-type DNA-binding region spans 165–227 (DKNEPTSPTP…DARRRIGWNE (63 aa)). A compositionally biased stretch (basic and acidic residues) spans 307 to 318 (LKNDEARRKREA). Disordered regions lie at residues 307–341 (LKND…SPAS), 353–381 (AIDS…SPLC), and 394–466 (SPVK…SDPF). Over residues 413–430 (TSAAPSPQPSLLPKLTPT) the composition is skewed to low complexity.

Belongs to the TALE/M-ATYP homeobox family. In terms of assembly, may dimerize.

It is found in the nucleus. Functionally, has a major regulatory role in sexual and asexual development. It may bind DNA itself or it may have a role in preventing DNA-binding of another protein. This chain is Mating-type protein beta1-1, found in Coprinopsis cinerea (Inky cap fungus).